Reading from the N-terminus, the 389-residue chain is Probable peptidoglycan glycosyltransferase FtsW (389 aa).

Topologically, residues 1 to 14 (MPIRDWRQQSQRWP) are cytoplasmic. A helical transmembrane segment spans residues 15–35 (IDYWLIGALAILITLGLTMVA). Residues 36 to 57 (SSSIAISEKRFGDPTHYLLRQM) lie on the Periplasmic side of the membrane. The chain crosses the membrane as a helical span at residues 58–78 (FSMGLGLMAAYIVLKIPLSFW). At 79–84 (RKHRGQ) the chain is on the cytoplasmic side. Residues 85-105 (LFIVGLVLLVLVLVFGREING) form a helical membrane-spanning segment. Residues 106 to 111 (SKRWLP) lie on the Periplasmic side of the membrane. A helical membrane pass occupies residues 112-132 (LVLMNFQVSEFMKIAVVVFMA). Topologically, residues 133 to 144 (GYLDRHATAVRE) are cytoplasmic. The chain crosses the membrane as a helical span at residues 145-165 (SFEAVIRLALPFGVMAILLLL). Residues 166-168 (EPD) are Periplasmic-facing. A helical transmembrane segment spans residues 169–189 (FGSTFVIAVIITGMLLIAGAP). Residues 190–191 (WR) are Cytoplasmic-facing. The chain crosses the membrane as a helical span at residues 192–212 (FFVMTVLPIATLLVMMVITSP). The Periplasmic portion of the chain corresponds to 213–268 (YRMARVTNFLDPWSDPFGNGYQLTQALIASGRGEWFGVGIGESVQKLLYLPDAHTD). The helical transmembrane segment at 269-289 (FLFSIYAEEYGLIGVAFLALL) threads the bilayer. Residues 290 to 310 (YLTLLYRCFRIGRKAFNQTHY) lie on the Cytoplasmic side of the membrane. Residues 311-331 (FGGLIAYGVGIWIVLQAMINM) form a helical membrane-spanning segment. Over 332-344 (GVNLGLFPTKGLT) the chain is Periplasmic. A helical transmembrane segment spans residues 345 to 365 (LPFMSYGGSSVLMLFIGVAMV). Residues 366–389 (LRVDLETRQAVLEHSVDESGQGKR) are Cytoplasmic-facing.

This sequence belongs to the SEDS family. FtsW subfamily.

The protein resides in the cell inner membrane. The catalysed reaction is [GlcNAc-(1-&gt;4)-Mur2Ac(oyl-L-Ala-gamma-D-Glu-L-Lys-D-Ala-D-Ala)](n)-di-trans,octa-cis-undecaprenyl diphosphate + beta-D-GlcNAc-(1-&gt;4)-Mur2Ac(oyl-L-Ala-gamma-D-Glu-L-Lys-D-Ala-D-Ala)-di-trans,octa-cis-undecaprenyl diphosphate = [GlcNAc-(1-&gt;4)-Mur2Ac(oyl-L-Ala-gamma-D-Glu-L-Lys-D-Ala-D-Ala)](n+1)-di-trans,octa-cis-undecaprenyl diphosphate + di-trans,octa-cis-undecaprenyl diphosphate + H(+). The protein operates within cell wall biogenesis; peptidoglycan biosynthesis. In terms of biological role, peptidoglycan polymerase that is essential for cell division. This chain is Probable peptidoglycan glycosyltransferase FtsW, found in Hydrogenovibrio crunogenus (strain DSM 25203 / XCL-2) (Thiomicrospira crunogena).